The chain runs to 317 residues: Probable cell division protein WhiA (317 aa).

Positions 275–308 (SLKELGEMLVPKVGKSGVNHRMRKIDELAEKLEE) form a DNA-binding region, H-T-H motif.

This sequence belongs to the WhiA family.

In terms of biological role, involved in cell division and chromosome segregation. The protein is Probable cell division protein WhiA of Desulfitobacterium hafniense (strain Y51).